Consider the following 1142-residue polypeptide: Envelopment polyprotein (1142 aa).

Residues 1–21 form the signal peptide; it reads MSKFCLCLSLLGVLLLQVCDT. Residues 22–489 are Lumenal-facing; it reads RSLLELKIEC…LCVPGIHGWS (468 aa). Intrachain disulfides connect cysteine 31–cysteine 156, cysteine 65–cysteine 162, cysteine 114–cysteine 133, cysteine 138–cysteine 143, cysteine 180–cysteine 190, and cysteine 215–cysteine 253. Residue asparagine 139 is glycosylated (N-linked (GlcNAc...) asparagine; by host). N-linked (GlcNAc...) asparagine; by host glycosylation occurs at asparagine 353. Disulfide bonds link cysteine 382–cysteine 441, cysteine 386–cysteine 395, cysteine 411–cysteine 430, and cysteine 458–cysteine 481. Asparagine 405 carries an N-linked (GlcNAc...) asparagine; by host glycan. Residues 490–510 form a helical membrane-spanning segment; the sequence is TIALLATFCFGWLLIPIISLV. Residues 511–633 lie on the Cytoplasmic side of the membrane; it reads SIKIMLLFAY…LSVFRYRSRC (123 aa). The binding to the ribonucleoprotein stretch occupies residues 522-539; it reads CSKYSNDSKFRLLIEKVK. CCHC-type zinc fingers lie at residues 551–571 and 576–597; these read CEVC…KKSC and CPYC…FKVC. 3 binding to the ribonucleoprotein regions span residues 594–611, 598–609, and 617–631; these read FKVC…RKSL, KLTTRFQENLRK, and KRGC…RYRS. One can recognise an ITAM domain in the interval 617-640; sequence KRGCYRTLSVFRYRSRCFVGLVWC. A YxxL motif is present at residues 621–624; that stretch reads YRTL. Residues 634–654 traverse the membrane as a helical segment; that stretch reads FVGLVWCILLVLELVIWAASA. The Lumenal segment spans residues 655–1110; it reads DTVEIKTGWT…EWLMGILSGN (456 aa). Cystine bridges form between cysteine 741–cysteine 776, cysteine 745–cysteine 783, cysteine 757–cysteine 890, cysteine 771–cysteine 901, cysteine 786–cysteine 909, cysteine 812–cysteine 821, cysteine 829–cysteine 838, and cysteine 869–cysteine 873. The tract at residues 763 to 783 is fusion loop; the sequence is YEFETGWGCNPGDCPGVGTGC. An N-linked (GlcNAc...) asparagine; by host glycan is attached at asparagine 933. 5 disulfide bridges follow: cysteine 975/cysteine 1005, cysteine 998/cysteine 1050, cysteine 1015/cysteine 1020, cysteine 1051/cysteine 1056, and cysteine 1090/cysteine 1094. A helical transmembrane segment spans residues 1111–1131; it reads WMVVAVLVVLLILSIFLFSLC. The interval 1127 to 1142 is binding to the ribonucleoprotein; that stretch reads LFSLCCPRRVVHKKSS. Residues 1132-1142 are Cytoplasmic-facing; sequence CPRRVVHKKSS.

Belongs to the hantavirus envelope glycoprotein family. Homodimer. Homotetramer; forms heterotetrameric Gn-Gc spikes in the pre-fusion conformation. Interacts (via C-terminus) with the nucleoprotein. Interacts with host TUFM; this interaction contributes to the virus-induced degradation of mitochondria by autophagy, which leads to degradation of host MAVS and inhibition of type I interferon (IFN) responses. Interacts with host MAP1LC3B; this interaction contributes to the virus-induced degradation of mitochondria by autophagy, which leads to degradation of host MAVS and inhibition of type I interferon (IFN) responses. In terms of assembly, homodimer. Homotetramer; forms heterotetrameric Gn-Gc spikes in the pre-fusion conformation. Homotrimer; forms homotrimer in the post-fusion conformation at acidic pH. Interacts (via C-terminus) with the nucleoprotein. Envelope polyprotein precursor is quickly cleaved in vivo just after synthesis, presumably by host signal peptidase.

It is found in the virion membrane. The protein resides in the host cell surface. The protein localises to the host Golgi apparatus membrane. It localises to the host endoplasmic reticulum membrane. Its subcellular location is the host mitochondrion. Forms homotetramers with glycoprotein C at the surface of the virion. Attaches the virion to host cell receptors including integrin alpha5/ITGB1. This attachment induces virion internalization predominantly through clathrin-dependent endocytosis. Mediates the assembly and budding of infectious virus particles through its interaction with the nucleocapsid protein and the viral genome. May dysregulate normal immune and endothelial cell responses through an ITAM motif. Translocates to mitochondria, binds to host TUFM and recruits MAP1LC3B. These interactions induce mitochondrial autophagy and therefore destruction of host MAVS leading to inhibition of type I interferon (IFN) responses. Concomitant breakdown of glycoprotein N is apparently prevented by the nucleoprotein that may inhibit Gn-stimulated autophagosome-lysosome fusion. Interacts with the viral genomic RNA. Its function is as follows. Forms homotetramers with glycoprotein N at the surface of the virion. Attaches the virion to host cell receptors including integrin ITGAV/ITGB3. This attachment induces virion internalization predominantly through clathrin-dependent endocytosis. Class II fusion protein that promotes fusion of viral membrane with host endosomal membrane after endocytosis of the virion. This is Envelopment polyprotein (GP) from Microtus pennsylvanicus (Meadow vole).